A 369-amino-acid chain; its full sequence is Glycolate oxidase 5 (369 aa).

The 360-residue stretch at 1–360 (MGEITNVTEY…TRNHVITEAD (360 aa)) folds into the FMN hydroxy acid dehydrogenase domain. Tyrosine 25 provides a ligand contact to glyoxylate. FMN contacts are provided by residues 78–80 (PSA), serine 107, 128–130 (QLY), and threonine 156. A glyoxylate-binding site is contributed by tyrosine 130. Position 165 (arginine 165) interacts with glyoxylate. FMN-binding residues include lysine 231 and serine 253. Residues histidine 255 and arginine 258 each contribute to the glyoxylate site. Histidine 255 acts as the Proton acceptor in catalysis. FMN is bound by residues 286 to 290 (DGGVR) and 309 to 310 (GR). A Microbody targeting signal motif is present at residues 367 to 369 (SRL).

This sequence belongs to the FMN-dependent alpha-hydroxy acid dehydrogenase family. In terms of assembly, homotetramer. FMN serves as cofactor.

It is found in the peroxisome. It carries out the reaction glycolate + O2 = glyoxylate + H2O2. The protein operates within photosynthesis; photorespiration; glycine from 2-phosphoglycolate: step 2/3. In terms of biological role, catalyzes the oxidation of glycolate to glyoxylate, with a reduction of O2 to H2O2. Is a key enzyme in photorespiration in green plants. The sequence is that of Glycolate oxidase 5 (GLO5) from Oryza sativa subsp. japonica (Rice).